The chain runs to 357 residues: Protein NDRG2 (357 aa).

Over residues 1-14 (MAELREVQITEEKP) the composition is skewed to basic and acidic residues. Residues 1 to 26 (MAELREVQITEEKPLLPGQTPEVAKT) form a disordered region. Alanine 2 bears the N-acetylalanine mark. Threonine 20 carries the post-translational modification Phosphothreonine. A phosphoserine mark is found at serine 312 and serine 314. Threonine 316 is modified (phosphothreonine). A Phosphoserine modification is found at serine 318. The residue at position 320 (threonine 320) is a Phosphothreonine. A disordered region spans residues 320–357 (TSAASIDGNRSRSRTLSQSSESGTLSSGPPGHTMEVSC). Residues serine 321, serine 324, and serine 330 each carry the phosphoserine modification. Residues 333–347 (RTLSQSSESGTLSSG) show a composition bias toward low complexity. The residue at position 334 (threonine 334) is a Phosphothreonine. A phosphoserine mark is found at serine 336, serine 338, serine 339, and serine 341. At threonine 343 the chain carries Phosphothreonine. Serine 356 is subject to Phosphoserine.

It belongs to the NDRG family. In terms of assembly, interacts with CTNNB1.

It localises to the cytoplasm. It is found in the perinuclear region. Its subcellular location is the cell projection. The protein resides in the growth cone. Contributes to the regulation of the Wnt signaling pathway. Down-regulates CTNNB1-mediated transcriptional activation of target genes, such as CCND1, and may thereby act as tumor suppressor. May be involved in dendritic cell and neuron differentiation. This Bos taurus (Bovine) protein is Protein NDRG2 (NDRG2).